The primary structure comprises 154 residues: SsrA-binding protein (154 aa).

This sequence belongs to the SmpB family.

It localises to the cytoplasm. Functionally, required for rescue of stalled ribosomes mediated by trans-translation. Binds to transfer-messenger RNA (tmRNA), required for stable association of tmRNA with ribosomes. tmRNA and SmpB together mimic tRNA shape, replacing the anticodon stem-loop with SmpB. tmRNA is encoded by the ssrA gene; the 2 termini fold to resemble tRNA(Ala) and it encodes a 'tag peptide', a short internal open reading frame. During trans-translation Ala-aminoacylated tmRNA acts like a tRNA, entering the A-site of stalled ribosomes, displacing the stalled mRNA. The ribosome then switches to translate the ORF on the tmRNA; the nascent peptide is terminated with the 'tag peptide' encoded by the tmRNA and targeted for degradation. The ribosome is freed to recommence translation, which seems to be the essential function of trans-translation. The polypeptide is SsrA-binding protein (Synechococcus sp. (strain JA-3-3Ab) (Cyanobacteria bacterium Yellowstone A-Prime)).